A 660-amino-acid polypeptide reads, in one-letter code: Threonine--tRNA ligase (660 aa).

In terms of domain architecture, TGS spans 1-49 (MPINEIRVQKGQRYRDAINDKKVIAVKKGDKFLDLDEIAGEDEAVQPVY). The catalytic stretch occupies residues 225–554 (DHRKIIAEMD…LLEHFAGKLP (330 aa)). Zn(2+)-binding residues include cysteine 318, histidine 369, and histidine 531.

It belongs to the class-II aminoacyl-tRNA synthetase family. As to quaternary structure, homodimer. Zn(2+) is required as a cofactor.

It localises to the cytoplasm. The catalysed reaction is tRNA(Thr) + L-threonine + ATP = L-threonyl-tRNA(Thr) + AMP + diphosphate + H(+). Functionally, catalyzes the attachment of threonine to tRNA(Thr) in a two-step reaction: L-threonine is first activated by ATP to form Thr-AMP and then transferred to the acceptor end of tRNA(Thr). The polypeptide is Threonine--tRNA ligase (Thermoplasma volcanium (strain ATCC 51530 / DSM 4299 / JCM 9571 / NBRC 15438 / GSS1)).